Reading from the N-terminus, the 308-residue chain is MMDLDKIIASLRDGKHIPEETVFRLCLNSQELLMNEGNVTQVDTPVTICGDIHGQLHDLLTLFEKSGGVEKTRYIFLGDFVDRGFYSLESFLLLLCYKLRYPDRITLIRGNHETRQITKVYGFYDEVVRKYGNSNVWRYCCEVFDYLSLGAIINNSIFCVHGGLSPDMTTVDEIRTIDRKQEVPHEGAMCDLLWSDPEDVDTWSLSPRGAGFLFGKREVDQFLEKNNVELIARAHQLVMEGYKEMFDGGLVTVWSAPNYCYRCGNVAAVLKIDDDLNREYTIFEAVQAQNEVGNAIIPTKKSQMDYFL.

Positions 51, 53, 79, and 111 each coordinate Mn(2+). His-112 functions as the Proton donor in the catalytic mechanism. Mn(2+) is bound by residues His-161 and His-235.

Belongs to the PPP phosphatase family. PP-4 (PP-X) subfamily. Catalytic subunit of the histone H2A phosphatase complex (HTP-C) containing PPH3, PSY2 and PSY4. Inactivated in a complex with phosphatase methylesterase PPE1 (PP2Ai). Interacts with phosphatase 2A activator RRD1, which can reactivate PP2Ai by dissociating the catalytic subunit from the complex. Interacts with SPT5 and TAP42. Requires Mn(2+) as cofactor. Post-translationally, reversibly methyl esterified on Leu-308 by leucine carboxyl methyltransferase 1 (PPM1) and protein phosphatase methylesterase 1 (PPE1). Carboxyl methylation influences the affinity of the catalytic subunit for the different regulatory subunits, thereby modulating the PP2A holoenzyme's substrate specificity, enzyme activity and cellular localization.

It localises to the cytoplasm. The protein localises to the nucleus. The enzyme catalyses O-phospho-L-seryl-[protein] + H2O = L-seryl-[protein] + phosphate. It carries out the reaction O-phospho-L-threonyl-[protein] + H2O = L-threonyl-[protein] + phosphate. Forms the histone H2A phosphatase complex in association with the regulatory subunits PSY2 and PSY4, which dephosphorylates H2AS128ph (gamma-H2A) that has been displaced from sites of DNA lesions in the double-stranded DNA break repair process. Dephosphorylation is necessary for efficient recovery from the DNA damage checkpoint. PPH3 is directly involved in the dephosphorylation and activation of the transcription factor GLN3 in response to nutrient availability. This Saccharomyces cerevisiae (strain ATCC 204508 / S288c) (Baker's yeast) protein is Serine/threonine-protein phosphatase 4 catalytic subunit (PPH3).